We begin with the raw amino-acid sequence, 187 residues long: Orotate phosphoribosyltransferase (187 aa).

110–118 (EDVVTTGGS) is a binding site for 5-phospho-alpha-D-ribose 1-diphosphate. 2 residues coordinate orotate: threonine 114 and arginine 142.

This sequence belongs to the purine/pyrimidine phosphoribosyltransferase family. PyrE subfamily. As to quaternary structure, homodimer. Requires Mg(2+) as cofactor.

The enzyme catalyses orotidine 5'-phosphate + diphosphate = orotate + 5-phospho-alpha-D-ribose 1-diphosphate. Its pathway is pyrimidine metabolism; UMP biosynthesis via de novo pathway; UMP from orotate: step 1/2. Its function is as follows. Catalyzes the transfer of a ribosyl phosphate group from 5-phosphoribose 1-diphosphate to orotate, leading to the formation of orotidine monophosphate (OMP). The sequence is that of Orotate phosphoribosyltransferase from Thermotoga maritima (strain ATCC 43589 / DSM 3109 / JCM 10099 / NBRC 100826 / MSB8).